Consider the following 200-residue polypeptide: Membrane-spanning 4-domains subfamily A member 5 (200 aa).

Residues 1-52 are Cytoplasmic-facing; sequence MDSSTAHSPVFLVFPPEITASEYESTELSATTFSTQSPLQKLFARKMKILGT. A helical transmembrane segment spans residues 53–73; that stretch reads IQILFGIMTFSFGVIFLFTLL. The Extracellular segment spans residues 74-80; the sequence is KPYPRFP. A helical transmembrane segment spans residues 81 to 101; sequence FIFLSGYPFWGSVLFINSGAF. At 102 to 120 the chain is on the cytoplasmic side; the sequence is LIAVKRKTTETLIILSRIM. Residues 121–141 traverse the membrane as a helical segment; sequence NFLSALGAIAGIILLTFGFIL. The Extracellular portion of the chain corresponds to 142 to 159; the sequence is DQNYICGYSHQNSQCKAV. The chain crosses the membrane as a helical span at residues 160 to 180; the sequence is TVLFLGILITLMTFSIIELFI. Residues 181–200 are Cytoplasmic-facing; the sequence is SLPFSILGCHSEDCDCEQCC.

Belongs to the MS4A family. In terms of tissue distribution, expressed at high level in the testis. Detected also in the pancreas, heart and in the brain.

It localises to the membrane. In terms of biological role, may be involved in signal transduction as a component of a multimeric receptor complex. This is Membrane-spanning 4-domains subfamily A member 5 (MS4A5) from Homo sapiens (Human).